Reading from the N-terminus, the 529-residue chain is Extracellular signal-regulated kinase 1 (529 aa).

2 disordered regions span residues 1–20 (MEPE…THQS) and 100–131 (QQNQ…SNFN). The segment covering 8-20 (FQSQMDSDNTHQS) has biased composition (polar residues). The segment covering 100–117 (QQNQQQQSQQMTQQQLQQ) has biased composition (low complexity). Residues 149-439 (YSIVKCIGHG…EALAHPYFQS (291 aa)) form the Protein kinase domain. ATP contacts are provided by residues 155-163 (IGHGAYGVV) and K178. D275 functions as the Proton acceptor in the catalytic mechanism. T309 carries the phosphothreonine modification. Residues 309-311 (TEY) carry the TXY motif. Position 311 is a phosphotyrosine (Y311).

The protein belongs to the protein kinase superfamily. CMGC Ser/Thr protein kinase family. MAP kinase subfamily. The cofactor is Mg(2+). Post-translationally, dually phosphorylated on Thr-309 and Tyr-311, which activates the enzyme.

It carries out the reaction L-seryl-[protein] + ATP = O-phospho-L-seryl-[protein] + ADP + H(+). The catalysed reaction is L-threonyl-[protein] + ATP = O-phospho-L-threonyl-[protein] + ADP + H(+). With respect to regulation, activated by tyrosine and threonine phosphorylation. Functionally, kinase involved in a signal transduction pathway. The sequence is that of Extracellular signal-regulated kinase 1 (erkA) from Dictyostelium discoideum (Social amoeba).